Consider the following 212-residue polypeptide: Pyrrolidone-carboxylate peptidase (212 aa).

Residues E78, C141, and H165 contribute to the active site.

Belongs to the peptidase C15 family. As to quaternary structure, homotetramer.

It is found in the cytoplasm. It carries out the reaction Release of an N-terminal pyroglutamyl group from a polypeptide, the second amino acid generally not being Pro.. Removes 5-oxoproline from various penultimate amino acid residues except L-proline. In Staphylococcus aureus (strain Mu3 / ATCC 700698), this protein is Pyrrolidone-carboxylate peptidase.